A 469-amino-acid polypeptide reads, in one-letter code: C4b-binding protein (469 aa).

A signal peptide spans 1–56 (MCAKQQQTLLPTRAAHGRLHRNRDAVAWPFSTLCRVSGPTLFQMTFTAALWVAVFG). Sushi domains lie at 57 to 117 (KCGP…SCAK), 118 to 178 (KHCR…ECVI), 179 to 242 (VKCG…TCEK), 243 to 301 (IICS…TCEF), 302 to 357 (DCDL…QCKA), and 358 to 415 (LCQK…RCEQ). Intrachain disulfides connect C58/C103, C88/C115, C120/C160, C146/C176, C181/C223, C209/C240, C245/C287, C273/C299, C303/C343, C329/C355, C359/C400, and C386/C413. Residue N74 is glycosylated (N-linked (GlcNAc...) asparagine). Residues N227, N275, and N292 are each glycosylated (N-linked (GlcNAc...) asparagine). N-linked (GlcNAc...) asparagine glycans are attached at residues N366 and N381. An N-linked (GlcNAc...) asparagine glycan is attached at N428.

Homoheptamer; not covalently linked. Mouse lacks the beta chain of C4BP.

The protein localises to the secreted. Its function is as follows. Controls the classical pathway of complement activation. It binds as a cofactor to C3b/C4b inactivator (C3bINA), which then hydrolyzes the complement fragment C4b. It also accelerates the degradation of the C4bC2a complex (C3 convertase) by dissociating the complement fragment C2a. Alpha chain binds C4b. It also interacts with serum amyloid P component. The polypeptide is C4b-binding protein (C4bpa) (Mus musculus (Mouse)).